Reading from the N-terminus, the 771-residue chain is Polymeric immunoglobulin receptor (771 aa).

A signal peptide spans 1 to 18; sequence MRLYLFTLLVTVFSGVST. Topologically, residues 19–645 are extracellular; the sequence is KSPIFGPQEV…DGQSRSSSSK (627 aa). The Ig-like V-type 1; required for binding to polymeric IgA and IgM domain occupies 21-120; it reads PIFGPQEVSS…GLGTSNRGLS (100 aa). Cys-40 and Cys-110 are joined by a disulfide. 4 N-linked (GlcNAc...) asparagine glycosylation sites follow: Asn-90, Asn-147, Asn-170, and Asn-206. Ig-like V-type domains follow at residues 135–237, 245–351, 352–457, and 463–563; these read SDTH…DLQV, LYKD…ESTI, PNRR…LQVA, and PNLE…IYIA. Cystine bridges form between Cys-152/Cys-220, Cys-257/Cys-324, and Cys-370/Cys-440. 2 N-linked (GlcNAc...) asparagine glycosylation sites follow: Asn-420 and Asn-471. A disulfide bridge connects residues Cys-484 and Cys-546. Residues 622–641 are disordered; it reads QAQENRASGDAGSADGQSRS. Over residues 627-641 the composition is skewed to low complexity; it reads RASGDAGSADGQSRS. The helical transmembrane segment at 646 to 668 threads the bilayer; it reads VLFSTLVPLGLVLAVGAIAVWVA. Residues 669–771 lie on the Cytoplasmic side of the membrane; sequence RVRHRKNVDR…AQVHDGPQEA (103 aa). Phosphoserine is present on residues Ser-680, Ser-689, Ser-696, and Ser-742.

As to quaternary structure, interacts (mainly via CDR1-like domain) with dimeric IgA. Interacts (mainly via CDR2-like domain) with pentameric IgM. Either free or part of the secretory IgA (sIgA) complex that consists of two, four or five IgA monomers, and two additional non-Ig polypeptides, namely the JCHAIN and the secretory component (the proteolytic product of PIGR). Free secretory component interacts with bacterial antigens toxA of C.difficile and eae of E.coli. Post-translationally, N-glycosylated. N-glycosylation is required for anchoring IgA molecules to mucus, but is not necessary for Ig binding.

It localises to the cell membrane. Its subcellular location is the secreted. In terms of biological role, mediates selective transcytosis of polymeric IgA and IgM across mucosal epithelial cells. Binds polymeric IgA and IgM at the basolateral surface of epithelial cells. The complex is then transported across the cell to be secreted at the apical surface. During this process, a cleavage occurs that separates the extracellular (known as the secretory component) from the transmembrane segment. Its function is as follows. Through its N-linked glycans ensures anchoring of secretory IgA (sIgA) molecules to mucus lining the epithelial surface to neutralize extracellular pathogens. On its own (free form) may act as a non-specific microbial scavenger to prevent pathogen interaction with epithelial cells. This Mus musculus (Mouse) protein is Polymeric immunoglobulin receptor (Pigr).